Reading from the N-terminus, the 315-residue chain is Heme oxygenase 2 (315 aa).

Over residues 1-12 (MSSEVETSEGVD) the composition is skewed to acidic residues. The disordered stretch occupies residues 1-28 (MSSEVETSEGVDESEKNSMAPEKENHTK). S2 is modified (N-acetylserine). Position 2 is a phosphoserine (S2). The Cytoplasmic segment spans residues 2–294 (SSEVETSEGV…TTVAVLRKPS (293 aa)). Positions 13 to 28 (ESEKNSMAPEKENHTK) are enriched in basic and acidic residues. 4 residues coordinate heme b: H44, Y153, K198, and R202. HRM repeat units lie at residues 263–268 (KCPFYA) and 280–285 (NCPFQT). An S-nitrosocysteine mark is found at C264 and C281. Residues 295–315 (LQLILAASVALVAGLLAWYYM) form a helical; Anchor for type IV membrane protein membrane-spanning segment.

Belongs to the heme oxygenase family. A soluble form arises by proteolytic removal of the membrane anchor. In terms of processing, S-nitrosylated by BLVRB. As to expression, ubiquitous.

Its subcellular location is the microsome membrane. It localises to the endoplasmic reticulum membrane. It catalyses the reaction heme b + 3 reduced [NADPH--hemoprotein reductase] + 3 O2 = biliverdin IXalpha + CO + Fe(2+) + 3 oxidized [NADPH--hemoprotein reductase] + 3 H2O + H(+). Functionally, catalyzes the oxidative cleavage of heme at the alpha-methene bridge carbon, released as carbon monoxide (CO), to generate biliverdin IXalpha, while releasing the central heme iron chelate as ferrous iron. The protein is Heme oxygenase 2 (Hmox2) of Mus musculus (Mouse).